We begin with the raw amino-acid sequence, 307 residues long: Dimethyladenosine transferase (307 aa).

S-adenosyl-L-methionine contacts are provided by H31, L33, G58, E79, D107, and N122.

Belongs to the class I-like SAM-binding methyltransferase superfamily. rRNA adenine N(6)-methyltransferase family.

It carries out the reaction adenosine(1779)/adenosine(1780) in 18S rRNA + 4 S-adenosyl-L-methionine = N(6)-dimethyladenosine(1779)/N(6)-dimethyladenosine(1780) in 18S rRNA + 4 S-adenosyl-L-homocysteine + 4 H(+). In terms of biological role, specifically dimethylates two adjacent adenosines in the loop of a conserved hairpin near the 3'-end of 18S rRNA in the 40S particle. The sequence is that of Dimethyladenosine transferase (dim1) from Schizosaccharomyces pombe (strain 972 / ATCC 24843) (Fission yeast).